Reading from the N-terminus, the 495-residue chain is Aspartyl/glutamyl-tRNA(Asn/Gln) amidotransferase subunit B (495 aa).

The protein belongs to the GatB/GatE family. GatB subfamily. As to quaternary structure, heterotrimer of A, B and C subunits.

The catalysed reaction is L-glutamyl-tRNA(Gln) + L-glutamine + ATP + H2O = L-glutaminyl-tRNA(Gln) + L-glutamate + ADP + phosphate + H(+). The enzyme catalyses L-aspartyl-tRNA(Asn) + L-glutamine + ATP + H2O = L-asparaginyl-tRNA(Asn) + L-glutamate + ADP + phosphate + 2 H(+). Its function is as follows. Allows the formation of correctly charged Asn-tRNA(Asn) or Gln-tRNA(Gln) through the transamidation of misacylated Asp-tRNA(Asn) or Glu-tRNA(Gln) in organisms which lack either or both of asparaginyl-tRNA or glutaminyl-tRNA synthetases. The reaction takes place in the presence of glutamine and ATP through an activated phospho-Asp-tRNA(Asn) or phospho-Glu-tRNA(Gln). The chain is Aspartyl/glutamyl-tRNA(Asn/Gln) amidotransferase subunit B from Gloeothece citriformis (strain PCC 7424) (Cyanothece sp. (strain PCC 7424)).